Reading from the N-terminus, the 237-residue chain is N-(5'-phosphoribosyl)anthranilate isomerase (237 aa).

Belongs to the TrpF family.

The catalysed reaction is N-(5-phospho-beta-D-ribosyl)anthranilate = 1-(2-carboxyphenylamino)-1-deoxy-D-ribulose 5-phosphate. It participates in amino-acid biosynthesis; L-tryptophan biosynthesis; L-tryptophan from chorismate: step 3/5. The chain is N-(5'-phosphoribosyl)anthranilate isomerase from Desulfitobacterium hafniense (strain Y51).